The sequence spans 466 residues: Chromosomal replication initiator protein DnaA (466 aa).

The interval 1 to 85 (MSLSLWQHCL…FEVGNKPVSA (85 aa)) is domain I, interacts with DnaA modulators. The disordered stretch occupies residues 82–122 (PVSARTTESVPKTVTHPAVNSTPTNSQPVRPSWDNQPQSQL). Residues 85–122 (ARTTESVPKTVTHPAVNSTPTNSQPVRPSWDNQPQSQL) show a composition bias toward polar residues. The domain II stretch occupies residues 85-129 (ARTTESVPKTVTHPAVNSTPTNSQPVRPSWDNQPQSQLPELNYRS). A domain III, AAA+ region region spans residues 130-346 (NVNPKHKFDN…GALNRVIANA (217 aa)). Positions 174, 176, 177, and 178 each coordinate ATP. Positions 347–466 (NFTGRAITID…FSNLIRTLSS (120 aa)) are domain IV, binds dsDNA.

The protein belongs to the DnaA family. Oligomerizes as a right-handed, spiral filament on DNA at oriC.

It localises to the cytoplasm. Its function is as follows. Plays an essential role in the initiation and regulation of chromosomal replication. ATP-DnaA binds to the origin of replication (oriC) to initiate formation of the DNA replication initiation complex once per cell cycle. Binds the DnaA box (a 9 base pair repeat at the origin) and separates the double-stranded (ds)DNA. Forms a right-handed helical filament on oriC DNA; dsDNA binds to the exterior of the filament while single-stranded (ss)DNA is stabiized in the filament's interior. The ATP-DnaA-oriC complex binds and stabilizes one strand of the AT-rich DNA unwinding element (DUE), permitting loading of DNA polymerase. After initiation quickly degrades to an ADP-DnaA complex that is not apt for DNA replication. Binds acidic phospholipids. The chain is Chromosomal replication initiator protein DnaA from Proteus mirabilis (strain HI4320).